The chain runs to 248 residues: Peptidyl-prolyl cis-trans isomerase, chloroplastic (248 aa).

The region spanning 85 to 243 (FFDIEIGGES…KPCKIAKSGE (159 aa)) is the PPIase cyclophilin-type domain. The disordered stretch occupies residues 223–248 (QETSKLDNSPKKPCKIAKSGELPLDG).

This sequence belongs to the cyclophilin-type PPIase family. As to expression, highly expressed in leaf.

It localises to the plastid. Its subcellular location is the chloroplast stroma. It catalyses the reaction [protein]-peptidylproline (omega=180) = [protein]-peptidylproline (omega=0). Binds cyclosporin A (CsA). CsA mediates some of its effects via an inhibitory action on PPIase. In terms of biological role, PPIases accelerate the folding of proteins. It catalyzes the cis-trans isomerization of proline imidic peptide bonds in oligopeptides. This is Peptidyl-prolyl cis-trans isomerase, chloroplastic from Vicia faba (Broad bean).